Reading from the N-terminus, the 251-residue chain is Small ribosomal subunit protein uS2 (251 aa).

The tract at residues 232-251 (LQTGEEEMAAAEGESEQVEA) is disordered. The span at 235 to 251 (GEEEMAAAEGESEQVEA) shows a compositional bias: acidic residues.

This sequence belongs to the universal ribosomal protein uS2 family.

This chain is Small ribosomal subunit protein uS2, found in Geobacter metallireducens (strain ATCC 53774 / DSM 7210 / GS-15).